The following is a 1224-amino-acid chain: WD repeat-containing protein 11 (1224 aa).

WD repeat units follow at residues 59–108 (KHKA…AQCE) and 111–154 (EHAK…KLWK). Residues Ser-205 and Ser-209 each carry the phosphoserine modification. A WD 3 repeat occupies 354–393 (KTVRPFSMVCCPVNENAAALVVSDGRVMIWELKSAVCNRN). Residues Ser-402 and Ser-406 each carry the phosphoserine modification. WD repeat units lie at residues 471–510 (RMCP…LHKE), 566–605 (NDES…LLRE), 708–745 (GSMG…SRGI), 747–787 (THRS…MVSS), 793–831 (NVTF…ACFR), and 893–940 (SLSN…HSLS).

As to quaternary structure, component of the complex WDR11 composed of C17orf75, FAM91A1 and WDR11; FAM91A1 and WDR11 are required for proper location of the complex. Interacts (via the N-terminal and the central portion of the protein) with EMX1. Interacts with GLI3; the interaction associateS EMX1 with GLI3. Interacts with TBC1D23; this interaction may be indirect and recruits TBC1D23 to AP-1-derived vesicles. As to expression, ubiquitous.

Its subcellular location is the cytoplasm. It is found in the cytoskeleton. The protein resides in the cilium basal body. It localises to the nucleus. The protein localises to the cilium axoneme. Its subcellular location is the cytoplasmic vesicle. It is found in the golgi apparatus. The protein resides in the trans-Golgi network. Functionally, involved in the Hedgehog (Hh) signaling pathway, is essential for normal ciliogenesis. Regulates the proteolytic processing of GLI3 and cooperates with the transcription factor EMX1 in the induction of downstream Hh pathway gene expression and gonadotropin-releasing hormone production. WDR11 complex facilitates the tethering of Adaptor protein-1 complex (AP-1)-derived vesicles. WDR11 complex acts together with TBC1D23 to facilitate the golgin-mediated capture of vesicles generated using AP-1. The polypeptide is WD repeat-containing protein 11 (WDR11) (Homo sapiens (Human)).